Reading from the N-terminus, the 229-residue chain is Large ribosomal subunit protein uL1 (229 aa).

Belongs to the universal ribosomal protein uL1 family. Part of the 50S ribosomal subunit.

Functionally, binds directly to 23S rRNA. The L1 stalk is quite mobile in the ribosome, and is involved in E site tRNA release. Protein L1 is also a translational repressor protein, it controls the translation of the L11 operon by binding to its mRNA. The protein is Large ribosomal subunit protein uL1 of Streptococcus pneumoniae (strain JJA).